The sequence spans 252 residues: Small ribosomal subunit protein uS2B (252 aa).

Serine 2 carries the post-translational modification N-acetylserine. 2 stretches are compositionally biased toward acidic residues: residues 213 to 229 (VAEEAAAAEEGEEEEVK) and 241 to 252 (EWAEENADNVEW). Residues 213-252 (VAEEAAAAEEGEEEEVKEEVTEGQAEATEWAEENADNVEW) are disordered.

The protein belongs to the universal ribosomal protein uS2 family. As to quaternary structure, component of the small ribosomal subunit. Mature ribosomes consist of a small (40S) and a large (60S) subunit. The 40S subunit contains about 33 different proteins and 1 molecule of RNA (18S). The 60S subunit contains about 49 different proteins and 3 molecules of RNA (25S, 5.8S and 5S). Interacts with RPS21.

It localises to the cytoplasm. Required for the assembly and/or stability of the 40S ribosomal subunit. Required for the processing of the 20S rRNA-precursor to mature 18S rRNA in a late step of the maturation of 40S ribosomal subunits. In Saccharomyces cerevisiae (strain RM11-1a) (Baker's yeast), this protein is Small ribosomal subunit protein uS2B.